The chain runs to 185 residues: Large ribosomal subunit protein uL5 (185 aa).

Belongs to the universal ribosomal protein uL5 family. Part of the 50S ribosomal subunit; part of the 5S rRNA/L5/L18/L25 subcomplex. Contacts the 5S rRNA and the P site tRNA. Forms a bridge to the 30S subunit in the 70S ribosome.

In terms of biological role, this is one of the proteins that bind and probably mediate the attachment of the 5S RNA into the large ribosomal subunit, where it forms part of the central protuberance. In the 70S ribosome it contacts protein S13 of the 30S subunit (bridge B1b), connecting the 2 subunits; this bridge is implicated in subunit movement. Contacts the P site tRNA; the 5S rRNA and some of its associated proteins might help stabilize positioning of ribosome-bound tRNAs. The protein is Large ribosomal subunit protein uL5 of Sinorhizobium medicae (strain WSM419) (Ensifer medicae).